The chain runs to 445 residues: 23S rRNA (uracil(1939)-C(5))-methyltransferase RlmD (445 aa).

The TRAM domain occupies 12-70; it reads SKQLSSKLSLNVTQLDHLGAGIAHHQGKIVFINGALPGETVQVQLTEQKKKFSRAKLLK. [4Fe-4S] cluster-binding residues include cysteine 83, cysteine 89, cysteine 92, and cysteine 171. S-adenosyl-L-methionine contacts are provided by glutamine 278, phenylalanine 307, asparagine 312, glutamate 328, aspartate 355, and aspartate 375. Cysteine 401 acts as the Nucleophile in catalysis.

This sequence belongs to the class I-like SAM-binding methyltransferase superfamily. RNA M5U methyltransferase family. RlmD subfamily.

The enzyme catalyses uridine(1939) in 23S rRNA + S-adenosyl-L-methionine = 5-methyluridine(1939) in 23S rRNA + S-adenosyl-L-homocysteine + H(+). Its function is as follows. Catalyzes the formation of 5-methyl-uridine at position 1939 (m5U1939) in 23S rRNA. In Shewanella piezotolerans (strain WP3 / JCM 13877), this protein is 23S rRNA (uracil(1939)-C(5))-methyltransferase RlmD.